We begin with the raw amino-acid sequence, 201 residues long: Increased recombination centers protein 21 (201 aa).

Residues 122–200 (PLRINRKIVK…LQVCFIGVVC (79 aa)) form the Cytochrome b5 heme-binding domain. Heme is bound by residues H158 and H182.

This sequence belongs to the cytochrome b5 family.

Its function is as follows. Involved in resistance to carboplatin and cisplatin. Is probably involved in a pathway contributing to genomic integrity. This chain is Increased recombination centers protein 21 (IRC21), found in Saccharomyces cerevisiae (strain ATCC 204508 / S288c) (Baker's yeast).